The primary structure comprises 564 residues: Protein NRT1/ PTR FAMILY 5.16 (564 aa).

2 helical membrane passes run 49 to 69 and 80 to 100; these read FAYFGIGSNLITYLTGPLGQS and WSGTASILPVLGAFIADAYLG. The residue at position 104 (Thr104) is a Phosphothreonine. 10 consecutive transmembrane segments (helical) span residues 110–130, 145–165, 192–212, 220–240, 327–347, 358–378, 408–428, 450–470, 486–506, and 533–553; these read LIYILGLGLLTLSSILILMGL, FFWVNILFFCSLYLVAIGQGG, FFNWWFLSLSAGITLSIIVVV, WALGFGIPCLFMVMALALFLF, IPIWITSVVSTIPYAQYATFF, ILPGFEIPPASFQALIGLSIF, IGAGMVLSSLNMVVAALVEMK, IWWFVPQYLLLGMIDVFSLVG, IGLALSLSAMGLASFLSGFLI, and YFYWLLAAFTAIGFLAFLLLS.

It belongs to the major facilitator superfamily. Proton-dependent oligopeptide transporter (POT/PTR) (TC 2.A.17) family. In terms of tissue distribution, expressed in shoots and roots.

It localises to the membrane. This chain is Protein NRT1/ PTR FAMILY 5.16 (NPF5.16), found in Arabidopsis thaliana (Mouse-ear cress).